We begin with the raw amino-acid sequence, 77 residues long: U8-lycotoxin-Ls1g (77 aa).

A signal peptide spans 1 to 20; that stretch reads MKLIIFTGLVLFAIVSLIEV. The propeptide occupies 21-26; sequence QADNER.

It belongs to the neurotoxin 19 (CSTX) family. 08 (U8-Lctx) subfamily. In terms of processing, contains 4 disulfide bonds. In terms of tissue distribution, expressed by the venom gland.

It localises to the secreted. In Lycosa singoriensis (Wolf spider), this protein is U8-lycotoxin-Ls1g.